The primary structure comprises 752 residues: Zinc finger BED domain-containing protein RICESLEEPER 3 (752 aa).

The BED-type zinc finger occupies 106 to 166 (RKKSVVWEHF…ASCPMLKNED (61 aa)). Positions 129, 132, 153, and 159 each coordinate Zn(2+). Residues 647 to 733 (ELEQYLEEAL…EALFCAKDWL (87 aa)) are HATC (Hobo-Ac-Tam3) domain.

Homodimer.

It is found in the nucleus. In terms of biological role, transposase-like protein that is essential for plant growth and development. May regulate global gene expression by recruiting other cellular factors. The chain is Zinc finger BED domain-containing protein RICESLEEPER 3 from Oryza sativa subsp. japonica (Rice).